The chain runs to 267 residues: Tryptophan synthase alpha chain (267 aa).

Residues E43 and D54 each act as proton acceptor in the active site.

This sequence belongs to the TrpA family. Tetramer of two alpha and two beta chains.

The enzyme catalyses (1S,2R)-1-C-(indol-3-yl)glycerol 3-phosphate + L-serine = D-glyceraldehyde 3-phosphate + L-tryptophan + H2O. Its pathway is amino-acid biosynthesis; L-tryptophan biosynthesis; L-tryptophan from chorismate: step 5/5. Its function is as follows. The alpha subunit is responsible for the aldol cleavage of indoleglycerol phosphate to indole and glyceraldehyde 3-phosphate. The sequence is that of Tryptophan synthase alpha chain from Bacillus pumilus (strain SAFR-032).